An 824-amino-acid polypeptide reads, in one-letter code: Probable receptor-like protein kinase At5g24010 (824 aa).

An N-terminal signal peptide occupies residues 1–24 (MAFPINLTQTLLFFFCPLLHLSFA). N-linked (GlcNAc...) asparagine glycosylation is found at asparagine 6, asparagine 41, asparagine 204, asparagine 227, and asparagine 291. At 25 to 406 (AFTPTDNYLI…SSEVVSGKRN (382 aa)) the chain is on the extracellular side. Residues 407-427 (VVWIVVGSVLGGFVFLSLFFL) traverse the membrane as a helical segment. Over 428–824 (SVLCLCRRKN…FSQLMTNAGR (397 aa)) the chain is Cytoplasmic. A disordered region spans residues 440–467 (TRSSESTGWTPLRRFRGSSNSRTTERTV). Positions 456–467 (GSSNSRTTERTV) are enriched in polar residues. Residues 489–764 (FDRSLVIGVG…VLWNLEHVLQ (276 aa)) enclose the Protein kinase domain. Residues 495 to 503 (IGVGGFGMV) and lysine 517 contribute to the ATP site. Aspartate 613 serves as the catalytic Proton acceptor. The tract at residues 777 to 803 (DYGDVTDPRTARQGLSNGSNIERDYGD) is disordered.

This sequence belongs to the protein kinase superfamily. Ser/Thr protein kinase family.

It is found in the membrane. The protein is Probable receptor-like protein kinase At5g24010 of Arabidopsis thaliana (Mouse-ear cress).